The following is a 211-amino-acid chain: Late expression factor 7 (211 aa).

Involved in late/very late gene activation. The polypeptide is Late expression factor 7 (LEF-7) (Orgyia pseudotsugata multicapsid polyhedrosis virus (OpMNPV)).